The primary structure comprises 146 residues: D-aminoacyl-tRNA deacylase (146 aa).

The short motif at 137 to 138 (GP) is the Gly-cisPro motif, important for rejection of L-amino acids element.

This sequence belongs to the DTD family. As to quaternary structure, homodimer.

The protein resides in the cytoplasm. It catalyses the reaction glycyl-tRNA(Ala) + H2O = tRNA(Ala) + glycine + H(+). The enzyme catalyses a D-aminoacyl-tRNA + H2O = a tRNA + a D-alpha-amino acid + H(+). An aminoacyl-tRNA editing enzyme that deacylates mischarged D-aminoacyl-tRNAs. Also deacylates mischarged glycyl-tRNA(Ala), protecting cells against glycine mischarging by AlaRS. Acts via tRNA-based rather than protein-based catalysis; rejects L-amino acids rather than detecting D-amino acids in the active site. By recycling D-aminoacyl-tRNA to D-amino acids and free tRNA molecules, this enzyme counteracts the toxicity associated with the formation of D-aminoacyl-tRNA entities in vivo and helps enforce protein L-homochirality. This Bacillus cereus (strain Q1) protein is D-aminoacyl-tRNA deacylase.